Here is a 189-residue protein sequence, read N- to C-terminus: Urease accessory protein UreF (189 aa).

This sequence belongs to the UreF family. As to quaternary structure, ureD, UreF and UreG form a complex that acts as a GTP-hydrolysis-dependent molecular chaperone, activating the urease apoprotein by helping to assemble the nickel containing metallocenter of UreC. The UreE protein probably delivers the nickel.

It localises to the cytoplasm. Functionally, required for maturation of urease via the functional incorporation of the urease nickel metallocenter. This Staphylococcus xylosus protein is Urease accessory protein UreF.